The primary structure comprises 284 residues: Homeobox protein CDX-4 (284 aa).

Disordered stretches follow at residues 15-40 (PGTL…SPMP) and 120-155 (GGGT…SRHS). Positions 22-37 (GGDGTAGTGGTGGGGS) are enriched in gly residues. The homeobox DNA-binding region spans 173 to 232 (KEKYRVVYTDHQRLELEKEFHCNRYITIQRKSELAVNLGLSERQVKIWFQNRRAKERKMI). A compositionally biased stretch (polar residues) spans 238–253 (QFENSGGSVQSDSDSI). Residues 238-259 (QFENSGGSVQSDSDSISPGELP) are disordered.

It belongs to the Caudal homeobox family.

The protein localises to the nucleus. The polypeptide is Homeobox protein CDX-4 (CDX4) (Homo sapiens (Human)).